A 278-amino-acid polypeptide reads, in one-letter code: Large ribosomal subunit protein uL2 (278 aa).

Disordered regions lie at residues 29-57 (PEKS…QGGG) and 224-278 (VAMN…NKKR). The span at 258-278 (RSPKKASNKYIVRRRKTNKKR) shows a compositional bias: basic residues.

It belongs to the universal ribosomal protein uL2 family. In terms of assembly, part of the 50S ribosomal subunit. Forms a bridge to the 30S subunit in the 70S ribosome.

In terms of biological role, one of the primary rRNA binding proteins. Required for association of the 30S and 50S subunits to form the 70S ribosome, for tRNA binding and peptide bond formation. It has been suggested to have peptidyltransferase activity; this is somewhat controversial. Makes several contacts with the 16S rRNA in the 70S ribosome. The sequence is that of Large ribosomal subunit protein uL2 from Streptomyces griseus subsp. griseus (strain JCM 4626 / CBS 651.72 / NBRC 13350 / KCC S-0626 / ISP 5235).